The chain runs to 478 residues: Zinc metalloproteinase/disintegrin (478 aa).

Positions 1-20 (MIQVLLVTICLAVFPYQGSS) are cleaved as a signal peptide. The propeptide occupies 21–194 (KTLKSGNVND…KASQLNLTPE (174 aa)). Pyrrolidone carboxylic acid is present on Q195. One can recognise a Peptidase M12B domain in the interval 201–397 (RYIELVIVAD…RNPQCILNQP (197 aa)). 2 residues coordinate Ca(2+): E204 and D288. Intrachain disulfides connect C312–C392, C352–C376, and C354–C359. H337 lines the Zn(2+) pocket. The active site involves E338. 2 residues coordinate Zn(2+): H341 and H347. Positions 392 and 395 each coordinate Ca(2+). A propeptide spanning residues 398 to 413 (LRTDTVSTPVSGNELL) is cleaved from the precursor. The 74-residue stretch at 405–478 (TPVSGNELLQ…SDCPRNPYKD (74 aa)) folds into the Disintegrin domain. Disulfide bonds link C420-C443, C434-C440, C439-C464, and C452-C471. The short motif at 456-458 (VGD) is the Cell attachment site; atypical (VGD) element.

This sequence belongs to the venom metalloproteinase (M12B) family. P-II subfamily. P-IIe sub-subfamily. In terms of assembly, monomer (metalloproteinase). Heterodimer; disulfide-linked (disintegrin). Requires Zn(2+) as cofactor. Expressed by the venom gland.

The protein localises to the secreted. With respect to regulation, fibrinolytic and caseinolytic activities are inhibited by Cd(2+), Cu(2+) and Co(2+) ions. Not inhibited by Mg(2+), Ca(2+) and Ba(2+). Also inhibited by EDTA, EGTA and 1,10-phenanthroline. Functionally, fibrinolytic and fibrinogenolytic metalloproteinase that hydrolyzes the Aalpha-chain and more slowly the Bbeta-chain of fibrin and fibrinogen. Its fibrinolytic activity is direct, without any plasminogen activation. Also hydrolyzes casein and B-chain of oxidized insulin. Inhibits ADP-induced and collagen-induced platelet aggregation. Shows low hemorrhagic activity. Cleaves the plasma proteinase inhibitors alpha(2)-macroglobulin (A2M) and pregnancy zone protein (PZP), and is inhibited by them. The metalloprotease has no strict P1-P1' specificity requirement. Hydrolysis at sites with a Pro residue at P1 is observed with bradykinin, substance P, PZP and alpha chain fibrinogen (FGA). In terms of biological role, poor inhibitor of platelet aggregation. The disintegrin inhibits the adhesion of the alpha-4/beta-1 (ITGA4/ITGB1) integrin to VCAM-1. Inhibition on alpha-2b/beta-3 (ITGA2B/ITGB3) is low. This Macrovipera lebetinus (Levantine viper) protein is Zinc metalloproteinase/disintegrin.